The chain runs to 375 residues: Histidine biosynthesis bifunctional protein HisB (375 aa).

The segment at 1–168 (MTPILFVDRD…GIAHELADAP (168 aa)) is histidinol-phosphatase. Residue Asp-8 is the Nucleophile of the active site. Asp-8, Asp-10, and Asp-128 together coordinate Mg(2+). The active-site Proton donor is Asp-10. The interval 169 to 375 (RRAVVQRNTK…SALPTTKGAL (207 aa)) is imidazoleglycerol-phosphate dehydratase.

The protein in the N-terminal section; belongs to the histidinol-phosphatase family. It in the C-terminal section; belongs to the imidazoleglycerol-phosphate dehydratase family. Mg(2+) serves as cofactor.

The protein localises to the cytoplasm. It carries out the reaction D-erythro-1-(imidazol-4-yl)glycerol 3-phosphate = 3-(imidazol-4-yl)-2-oxopropyl phosphate + H2O. The enzyme catalyses L-histidinol phosphate + H2O = L-histidinol + phosphate. The protein operates within amino-acid biosynthesis; L-histidine biosynthesis; L-histidine from 5-phospho-alpha-D-ribose 1-diphosphate: step 6/9. Its pathway is amino-acid biosynthesis; L-histidine biosynthesis; L-histidine from 5-phospho-alpha-D-ribose 1-diphosphate: step 8/9. The chain is Histidine biosynthesis bifunctional protein HisB from Xanthomonas oryzae pv. oryzae (strain MAFF 311018).